Reading from the N-terminus, the 254-residue chain is MEEQVFASKKVGVLPARWGSVRFTGKPLANILGKSLIQRTYENISQSTTLDKVVVATDNQRIMDHVLDFGGDCVMTSPECANGTERTAEAISRYFPEAEIIVNIQGDEPCLQHTVVDTLVRKLEESPEIQVVTPAAKTTDSHEILTNQKVKCVFDKNGKALYFSRSPIPHILKKETPIYLHIGVYAFRRNALFSYIESTPTSLSQAEDLEQLRILEHGGSIHICVVEAKSPSVDYPEDINKVEKYLTCHSSASF.

The protein belongs to the KdsB family.

It localises to the cytoplasm. It carries out the reaction 3-deoxy-alpha-D-manno-oct-2-ulosonate + CTP = CMP-3-deoxy-beta-D-manno-octulosonate + diphosphate. It functions in the pathway nucleotide-sugar biosynthesis; CMP-3-deoxy-D-manno-octulosonate biosynthesis; CMP-3-deoxy-D-manno-octulosonate from 3-deoxy-D-manno-octulosonate and CTP: step 1/1. It participates in bacterial outer membrane biogenesis; lipopolysaccharide biosynthesis. Functionally, activates KDO (a required 8-carbon sugar) for incorporation into bacterial lipopolysaccharide in Gram-negative bacteria. This is 3-deoxy-manno-octulosonate cytidylyltransferase from Chlamydia felis (strain Fe/C-56) (Chlamydophila felis).